A 355-amino-acid polypeptide reads, in one-letter code: Blue-sensitive opsin P467 (355 aa).

Over 1 to 36 (MNGTEGINFYVPLSNKTGLVRSPFEYPQYYLADPWK) the chain is Extracellular. 2 N-linked (GlcNAc...) asparagine glycosylation sites follow: Asn2 and Asn15. A helical membrane pass occupies residues 37–61 (FKVLSFYMFFLIAAGMPLNGLTLFV). At 62–73 (TFQHKKLRQPLN) the chain is on the cytoplasmic side. A helical transmembrane segment spans residues 74 to 98 (YILVNLAAANLVTVCCGFTVTFYAS). The Extracellular segment spans residues 99–113 (WYAYFVFGPIGCAIE). Residues Cys110 and Cys187 are joined by a disulfide bond. Residues 114–133 (GFFATIGGQVALWSLVVLAI) form a helical membrane-spanning segment. At 134 to 152 (ERYIVICKPMGNFRFSATH) the chain is on the cytoplasmic side. The helical transmembrane segment at 153-176 (AIMGIAFTWFMALACAGPPLFGWS) threads the bilayer. The Extracellular segment spans residues 177-202 (RFIPEGMQCSCGPDYYTLNPDFHNES). Residue Asn200 is glycosylated (N-linked (GlcNAc...) asparagine). A helical transmembrane segment spans residues 203–230 (YVIYMFIVHFTVPMVVIFFSYGRLVCKV). Residues 231-252 (REAAAQQQESATTQKAEKEVTR) are Cytoplasmic-facing. The chain crosses the membrane as a helical span at residues 253–276 (MVILMVLGFLLAWTPYAATAIWIF). At 277-284 (TNRGAAFS) the chain is on the extracellular side. Residues 285–309 (VTFMTIPAFFSKSSSIYNPIIYVLL) form a helical membrane-spanning segment. Lys296 carries the N6-(retinylidene)lysine modification. Topologically, residues 310–355 (NKQFRNCMVTTICCGKNPFGDEDVSSSVSQSKTEVSSVSSSQVAPA) are cytoplasmic. Residues 333–355 (VSSSVSQSKTEVSSVSSSQVAPA) are disordered. Over residues 334-355 (SSSVSQSKTEVSSVSSSQVAPA) the composition is skewed to low complexity.

Belongs to the G-protein coupled receptor 1 family. Opsin subfamily. In terms of processing, phosphorylated on some or all of the serine and threonine residues present in the C-terminal region. In terms of tissue distribution, in this lizard the color pigments are found in the rod-shaped photoreceptor cells which have been derived from ancestral cone-like photoreceptors.

It is found in the membrane. In terms of biological role, visual pigments are the light-absorbing molecules that mediate vision. They consist of an apoprotein, opsin, covalently linked to cis-retinal. In Gekko gecko (Tokay gecko), this protein is Blue-sensitive opsin P467.